We begin with the raw amino-acid sequence, 99 residues long: Protein Tat (99 aa).

Positions 1-22 are disordered; the sequence is MDPVDPNLEPWNHPGSQPRTPC. The tract at residues 1-24 is interaction with human CREBBP; sequence MDPVDPNLEPWNHPGSQPRTPCNK. A transactivation region spans residues 1–48; that stretch reads MDPVDPNLEPWNHPGSQPRTPCNKCHCKKCCYHCPVCFLNKGLGISYG. Zn(2+) is bound by residues Cys-22, Cys-25, and Cys-27. Positions 22–37 are cysteine-rich; sequence CNKCHCKKCCYHCPVC. Lys-28 bears the N6-acetyllysine; by host PCAF mark. 4 residues coordinate Zn(2+): Cys-30, His-33, Cys-34, and Cys-37. A core region spans residues 38–48; it reads FLNKGLGISYG. The tract at residues 48–99 is disordered; sequence GRKKRRQRRGPPQGGQAHQVPIPKQPSSQPRGDPTGPKEQKKKVESEAETDP. The short motif at 49–57 is the Nuclear localization signal, RNA-binding (TAR), and protein transduction element; it reads RKKRRQRRG. The interval 49–86 is interaction with the host capping enzyme RNGTT; it reads RKKRRQRRGPPQGGQAHQVPIPKQPSSQPRGDPTGPKE. An N6-acetyllysine; by host EP300 and GCN5L2 mark is found at Lys-50 and Lys-51. Arg-52 and Arg-53 each carry asymmetric dimethylarginine; by host PRMT6. Residue Lys-71 forms a Glycyl lysine isopeptide (Lys-Gly) (interchain with G-Cter in ubiquitin) linkage. The short motif at 78 to 80 is the Cell attachment site element; sequence RGD. Basic and acidic residues predominate over residues 83–93; sequence GPKEQKKKVES.

The protein belongs to the lentiviruses Tat family. As to quaternary structure, interacts with host CCNT1. Associates with the P-TEFb complex composed at least of Tat, P-TEFb (CDK9 and CCNT1), TAR RNA, RNA Pol II. Recruits the HATs CREBBP, TAF1/TFIID, EP300, PCAF and GCN5L2. Interacts with host KAT5/Tip60; this interaction targets the latter to degradation. Interacts with the host deacetylase SIRT1. Interacts with host capping enzyme RNGTT; this interaction stimulates RNGTT. Binds to host KDR, and to the host integrins ITGAV/ITGB3 and ITGA5/ITGB1. Interacts with host KPNB1/importin beta-1 without previous binding to KPNA1/importin alpha-1. Interacts with EIF2AK2. Interacts with host nucleosome assembly protein NAP1L1; this interaction may be required for the transport of Tat within the nucleus, since the two proteins interact at the nuclear rim. Interacts with host C1QBP/SF2P32; this interaction involves lysine-acetylated Tat. Interacts with the host chemokine receptors CCR2, CCR3 and CXCR4. Interacts with host DPP4/CD26; this interaction may trigger an anti-proliferative effect. Interacts with host LDLR. Interacts with the host extracellular matrix metalloproteinase MMP1. Interacts with host PRMT6; this interaction mediates Tat's methylation. Interacts with, and is ubiquitinated by MDM2/Hdm2. Interacts with host PSMC3 and HTATIP2. Interacts with STAB1; this interaction may overcome SATB1-mediated repression of IL2 and IL2RA (interleukin) in T cells by binding to the same domain than HDAC1. Interacts (when acetylated) with human CDK13, thereby increasing HIV-1 mRNA splicing and promoting the production of the doubly spliced HIV-1 protein Nef. Interacts with host TBP; this interaction modulates the activity of transcriptional pre-initiation complex. Interacts with host RELA. Interacts with host PLSCR1; this interaction negatively regulates Tat transactivation activity by altering its subcellular distribution. Asymmetrical arginine methylation by host PRMT6 seems to diminish the transactivation capacity of Tat and affects the interaction with host CCNT1. In terms of processing, acetylation by EP300, CREBBP, GCN5L2/GCN5 and PCAF regulates the transactivation activity of Tat. EP300-mediated acetylation of Lys-50 promotes dissociation of Tat from the TAR RNA through the competitive binding to PCAF's bromodomain. In addition, the non-acetylated Tat's N-terminus can also interact with PCAF. PCAF-mediated acetylation of Lys-28 enhances Tat's binding to CCNT1. Lys-50 is deacetylated by SIRT1. Post-translationally, polyubiquitination by host MDM2 does not target Tat to degradation, but activates its transactivation function and fosters interaction with CCNT1 and TAR RNA. Phosphorylated by EIF2AK2 on serine and threonine residues adjacent to the basic region important for TAR RNA binding and function. Phosphorylation of Tat by EIF2AK2 is dependent on the prior activation of EIF2AK2 by dsRNA.

It is found in the host nucleus. It localises to the host nucleolus. The protein resides in the host cytoplasm. Its subcellular location is the secreted. Its function is as follows. Transcriptional activator that increases RNA Pol II processivity, thereby increasing the level of full-length viral transcripts. Recognizes a hairpin structure at the 5'-LTR of the nascent viral mRNAs referred to as the transactivation responsive RNA element (TAR) and recruits the cyclin T1-CDK9 complex (P-TEFb complex) that will in turn hyperphosphorylate the RNA polymerase II to allow efficient elongation. The CDK9 component of P-TEFb and other Tat-activated kinases hyperphosphorylate the C-terminus of RNA Pol II that becomes stabilized and much more processive. Other factors such as HTATSF1/Tat-SF1, SUPT5H/SPT5, and HTATIP2 are also important for Tat's function. Besides its effect on RNA Pol II processivity, Tat induces chromatin remodeling of proviral genes by recruiting the histone acetyltransferases (HATs) CREBBP, EP300 and PCAF to the chromatin. This also contributes to the increase in proviral transcription rate, especially when the provirus integrates in transcriptionally silent region of the host genome. To ensure maximal activation of the LTR, Tat mediates nuclear translocation of NF-kappa-B by interacting with host RELA. Through its interaction with host TBP, Tat may also modulate transcription initiation. Tat can reactivate a latently infected cell by penetrating in it and transactivating its LTR promoter. In the cytoplasm, Tat is thought to act as a translational activator of HIV-1 mRNAs. Extracellular circulating Tat can be endocytosed by surrounding uninfected cells via the binding to several surface receptors such as CD26, CXCR4, heparan sulfate proteoglycans (HSPG) or LDLR. Neurons are rarely infected, but they internalize Tat via their LDLR. Through its interaction with nuclear HATs, Tat is potentially able to control the acetylation-dependent cellular gene expression. Modulates the expression of many cellular genes involved in cell survival, proliferation or in coding for cytokines or cytokine receptors. Tat plays a role in T-cell and neurons apoptosis. Tat induced neurotoxicity and apoptosis probably contribute to neuroAIDS. Circulating Tat also acts as a chemokine-like and/or growth factor-like molecule that binds to specific receptors on the surface of the cells, affecting many cellular pathways. In the vascular system, Tat binds to ITGAV/ITGB3 and ITGA5/ITGB1 integrins dimers at the surface of endothelial cells and competes with bFGF for heparin-binding sites, leading to an excess of soluble bFGF. This is Protein Tat from Homo sapiens (Human).